The primary structure comprises 769 residues: Serine/threonine-protein kinase PLK4 (769 aa).

The Protein kinase domain occupies 14-267 (YEVQHLLGKG…LEAVLCHPFM (254 aa)). ATP is bound by residues 20-28 (LGKGGFATV) and lysine 43. Catalysis depends on aspartate 138, which acts as the Proton acceptor. Residues 381–498 (EDRISVPPLN…ARFVGLVKSK (118 aa)) form the Cryptic POLO box 1 (CPB1) domain. The region spanning 499 to 602 (TPKVTYFSTL…GRRPITDVQP (104 aa)) is the Cryptic POLO box 2 (CPB2) domain. Positions 660 to 739 (PIKRINVPDI…IPNIQLKLKT (80 aa)) constitute a POLO box domain.

Belongs to the protein kinase superfamily. Ser/Thr protein kinase family. CDC5/Polo subfamily. Homodimer. In terms of processing, ubiquitinated by the SCF(Slimb) ubiquitin ligase complex; leading to its degradation by the proteasome during interphase and regulating centriole number and ensuring the block to centriole reduplication.

The protein resides in the cytoplasm. The protein localises to the cytoskeleton. It localises to the microtubule organizing center. Its subcellular location is the centrosome. It is found in the centriole. The enzyme catalyses L-seryl-[protein] + ATP = O-phospho-L-seryl-[protein] + ADP + H(+). It carries out the reaction L-threonyl-[protein] + ATP = O-phospho-L-threonyl-[protein] + ADP + H(+). Its function is as follows. Serine/threonine-protein kinase that plays a central role in centriole duplication. Able to trigger procentriole formation on the surface of the mother centriole cylinder, using mother centriole as a platform, leading to the recruitment of centriole biogenesis proteins such as sas-6. When overexpressed, it is able to induce centrosome amplification through the simultaneous generation of multiple procentrioles adjoining each parental centriole during S phase. Centrosome amplification following overexpression can initiate tumorigenesis, highlighting the importance of centrosome regulation in cancers. The polypeptide is Serine/threonine-protein kinase PLK4 (SAK) (Drosophila simulans (Fruit fly)).